We begin with the raw amino-acid sequence, 1511 residues long: DNA-directed RNA polymerase subunit beta' (1511 aa).

The Zn(2+) site is built by cysteine 75, cysteine 77, cysteine 90, and cysteine 93. Mg(2+) contacts are provided by aspartate 474, aspartate 476, and aspartate 478. The Zn(2+) site is built by cysteine 804, cysteine 878, cysteine 885, and cysteine 888.

This sequence belongs to the RNA polymerase beta' chain family. As to quaternary structure, the RNAP catalytic core consists of 2 alpha, 1 beta, 1 beta' and 1 omega subunit. When a sigma factor is associated with the core the holoenzyme is formed, which can initiate transcription. Requires Mg(2+) as cofactor. Zn(2+) serves as cofactor.

The catalysed reaction is RNA(n) + a ribonucleoside 5'-triphosphate = RNA(n+1) + diphosphate. DNA-dependent RNA polymerase catalyzes the transcription of DNA into RNA using the four ribonucleoside triphosphates as substrates. The chain is DNA-directed RNA polymerase subunit beta' from Aliarcobacter butzleri (strain RM4018) (Arcobacter butzleri).